The chain runs to 638 residues: Zinc finger and BTB domain-containing protein 22 (638 aa).

The BTB domain maps to Cys57–Ala121. 4 disordered regions span residues Cys171 to Gln223, Ser229 to Val248, Asp335 to Glu354, and Glu367 to Val451. A compositionally biased stretch (polar residues) spans Ser189–Phe210. Position 203 is a phosphoserine (Ser203). A C2H2-type 1; atypical zinc finger spans residues Phe483–His504. 2 C2H2-type zinc fingers span residues Phe510–His532 and Tyr538–His559. Residues His564–His638 are disordered.

It belongs to the krueppel C2H2-type zinc-finger protein family.

The protein localises to the nucleus. Functionally, may be involved in transcriptional regulation. The polypeptide is Zinc finger and BTB domain-containing protein 22 (Zbtb22) (Mus musculus (Mouse)).